A 268-amino-acid chain; its full sequence is Hydroxyacylglutathione hydrolase (268 aa).

Zn(2+)-binding residues include histidine 56, histidine 58, aspartate 60, histidine 61, histidine 112, aspartate 137, and histidine 176. 176–178 contributes to the substrate binding site; the sequence is HEY.

This sequence belongs to the metallo-beta-lactamase superfamily. Glyoxalase II family. Monomer. It depends on Zn(2+) as a cofactor.

The enzyme catalyses an S-(2-hydroxyacyl)glutathione + H2O = a 2-hydroxy carboxylate + glutathione + H(+). It participates in secondary metabolite metabolism; methylglyoxal degradation; (R)-lactate from methylglyoxal: step 2/2. In terms of biological role, thiolesterase that catalyzes the hydrolysis of S-D-lactoyl-glutathione to form glutathione and D-lactic acid. This chain is Hydroxyacylglutathione hydrolase (hagh), found in Dictyostelium discoideum (Social amoeba).